The following is a 115-amino-acid chain: MKKKHRIKKNDEFQAVFQKGKSNANRQFVVYQLDKEEQPNFRIGLSVSKKIGNAVVRNRIKRMVRQAITELKDEIASGKDFVIIARKPCAEMTYEEVKKSLIHVFKRSGMKRIKK.

Belongs to the RnpA family. Consists of a catalytic RNA component (M1 or rnpB) and a protein subunit.

The enzyme catalyses Endonucleolytic cleavage of RNA, removing 5'-extranucleotides from tRNA precursor.. RNaseP catalyzes the removal of the 5'-leader sequence from pre-tRNA to produce the mature 5'-terminus. It can also cleave other RNA substrates such as 4.5S RNA. The protein component plays an auxiliary but essential role in vivo by binding to the 5'-leader sequence and broadening the substrate specificity of the ribozyme. The polypeptide is Ribonuclease P protein component (Bacillus cereus (strain B4264)).